A 765-amino-acid chain; its full sequence is Phosphoribosylformylglycinamidine synthase subunit PurL (765 aa).

The active site involves His-41. 2 residues coordinate ATP: Tyr-44 and Lys-83. Glu-85 serves as a coordination point for Mg(2+). Substrate contacts are provided by residues 86-89 (SHNH) and Arg-108. Catalysis depends on His-87, which acts as the Proton acceptor. Asp-109 lines the Mg(2+) pocket. Gln-232 lines the substrate pocket. Asp-260 lines the Mg(2+) pocket. 304 to 306 (ESQ) is a binding site for substrate. 2 residues coordinate ATP: Asp-503 and Gly-540. Position 541 (Asn-541) interacts with Mg(2+). Ser-543 provides a ligand contact to substrate.

It belongs to the FGAMS family. As to quaternary structure, monomer. Part of the FGAM synthase complex composed of 1 PurL, 1 PurQ and 2 PurS subunits.

Its subcellular location is the cytoplasm. It carries out the reaction N(2)-formyl-N(1)-(5-phospho-beta-D-ribosyl)glycinamide + L-glutamine + ATP + H2O = 2-formamido-N(1)-(5-O-phospho-beta-D-ribosyl)acetamidine + L-glutamate + ADP + phosphate + H(+). The protein operates within purine metabolism; IMP biosynthesis via de novo pathway; 5-amino-1-(5-phospho-D-ribosyl)imidazole from N(2)-formyl-N(1)-(5-phospho-D-ribosyl)glycinamide: step 1/2. Its function is as follows. Part of the phosphoribosylformylglycinamidine synthase complex involved in the purines biosynthetic pathway. Catalyzes the ATP-dependent conversion of formylglycinamide ribonucleotide (FGAR) and glutamine to yield formylglycinamidine ribonucleotide (FGAM) and glutamate. The FGAM synthase complex is composed of three subunits. PurQ produces an ammonia molecule by converting glutamine to glutamate. PurL transfers the ammonia molecule to FGAR to form FGAM in an ATP-dependent manner. PurS interacts with PurQ and PurL and is thought to assist in the transfer of the ammonia molecule from PurQ to PurL. The chain is Phosphoribosylformylglycinamidine synthase subunit PurL from Synechococcus sp. (strain WH7803).